The sequence spans 502 residues: Glutamate decarboxylase (502 aa).

Lys-278 bears the N6-(pyridoxal phosphate)lysine mark. The tract at residues 471 to 502 is calmodulin-binding; sequence GLHHFHMDTVETQKDIIKHWRKIAGKKTSGVC.

The protein belongs to the group II decarboxylase family. Requires pyridoxal 5'-phosphate as cofactor.

The catalysed reaction is L-glutamate + H(+) = 4-aminobutanoate + CO2. In terms of biological role, catalyzes the production of GABA. The calmodulin-binding is calcium-dependent and it is proposed that this may, directly or indirectly, form a calcium regulated control of GABA biosynthesis. This is Glutamate decarboxylase from Solanum lycopersicum (Tomato).